Here is a 151-residue protein sequence, read N- to C-terminus: MAVYEILKMGDPVLREKAKPVTRFNSNLGRLIDDMFDTMAAARGVGLAAPQIGIGKRVCVVEVGKRRFELVNPEIIEAEGEQCDAEGCLSIPDYTGRVKRFQRVRVKAQDRKGETFIAEGTDLLAVAFQHEIDHLDGILFVDRVENDNPEE.

Residues Cys88 and His130 each coordinate Fe cation. Glu131 is a catalytic residue. His134 contacts Fe cation.

It belongs to the polypeptide deformylase family. Fe(2+) serves as cofactor.

It carries out the reaction N-terminal N-formyl-L-methionyl-[peptide] + H2O = N-terminal L-methionyl-[peptide] + formate. Its function is as follows. Removes the formyl group from the N-terminal Met of newly synthesized proteins. Requires at least a dipeptide for an efficient rate of reaction. N-terminal L-methionine is a prerequisite for activity but the enzyme has broad specificity at other positions. This is Peptide deformylase from Heliobacterium modesticaldum (strain ATCC 51547 / Ice1).